The following is a 1006-amino-acid chain: Unconventional myosin-Id (1006 aa).

Residue alanine 2 is modified to N-acetylalanine. Residues phenylalanine 9–alanine 695 enclose the Myosin motor domain. ATP is bound at residue glycine 102–threonine 109. The residue at position 200 (serine 200) is a Phosphoserine. A Phosphotyrosine modification is found at tyrosine 536. The actin-binding stretch occupies residues methionine 572–aspartate 594. IQ domains are found at residues valine 699–lysine 719 and threonine 721–histidine 741. The TH1 domain maps to glycine 812–glycine 1005.

The protein belongs to the TRAFAC class myosin-kinesin ATPase superfamily. Myosin family. Interacts (via the two IQ motifs) with calmodulin. Binds an additional calmodulin chain via a third, C-terminal region. Interacts with F-actin.

Its subcellular location is the cytoplasm. It is found in the perikaryon. The protein resides in the cell projection. The protein localises to the dendrite. It localises to the early endosome. Its subcellular location is the cell cortex. In terms of biological role, unconventional myosin that functions as actin-based motor protein with ATPase activity. Plays a role in endosomal protein trafficking, and especially in the transfer of cargo proteins from early to recycling endosomes. Required for normal planar cell polarity in ciliated tracheal cells, for normal rotational polarity of cilia, and for coordinated, unidirectional ciliary movement in the trachea. Required for normal, polarized cilia organization in brain ependymal epithelial cells. The polypeptide is Unconventional myosin-Id (MYO1D) (Bos taurus (Bovine)).